The following is a 541-amino-acid chain: MHTLIKGVLEEILEEEVIIEYPKDREHGHYATPIAFNLAKVFKKSPLVIAEELALKISTHEKTQGLFDSVVACKGYINFTLSLDFLERFTQKALELKEKFGSQPKSERSQKIFLEFVSANPTGPLHIGHARGAVFGDSLAKIARFLGHEVLCEYYVNDMGSQIRLLGLSVWLAYREHVLKESVTYPEVFYKGEYIIEIAKKANNDLEPSLFKENEETIIEVLSGYAKDLMLLEIKDNLDALGIHFDSYASEREVFKHKDAVFERLEKANALYEKDSKIWLKSSLYQDESDRVLIKEDKSYTYLAGDIVYHDEKFKQNYTKYINIWGADHHGYIARVKASLEFLGYDSNKLEVLLAQMVRLLKDNEPYKMSKRAGNFILIKDVIDDVGKDALRFIFLSKRLDTHLEFDVNTLKKQDSSNPIYYIHYANSRIHTMLEKSPFSKEEVLQTPLTDLNAEEKYLLFSALSLPKIIESSFEEYGLQKMCEYAKTLASEFHRFYNAGKILDTPKAKELLKICLMVSLSLSNAFKLLGIEIKTKISAKD.

The 'HIGH' region signature appears at 119–129 (ANPTGPLHIGH).

This sequence belongs to the class-I aminoacyl-tRNA synthetase family. Monomer.

It localises to the cytoplasm. It carries out the reaction tRNA(Arg) + L-arginine + ATP = L-arginyl-tRNA(Arg) + AMP + diphosphate. This is Arginine--tRNA ligase from Helicobacter pylori (strain Shi470).